The chain runs to 348 residues: Small ribosomal subunit protein mS45 (348 aa).

Low complexity predominate over residues 37–57 (SCSSSSPQSSQPTTHQQQCSS). Positions 37–63 (SCSSSSPQSSQPTTHQQQCSSFSTTAP) are disordered.

It belongs to the mitochondrion-specific ribosomal protein mS45 family. Component of the mitochondrial small ribosomal subunit (mt-SSU). Mature N.crassa 74S mitochondrial ribosomes consist of a small (37S) and a large (54S) subunit. The 37S small subunit contains a 16S ribosomal RNA (16S mt-rRNA) and 32 different proteins. The 54S large subunit contains a 23S rRNA (23S mt-rRNA) and 42 different proteins.

Its subcellular location is the mitochondrion. Component of the mitochondrial ribosome (mitoribosome), a dedicated translation machinery responsible for the synthesis of mitochondrial genome-encoded proteins, including at least some of the essential transmembrane subunits of the mitochondrial respiratory chain. The mitoribosomes are attached to the mitochondrial inner membrane and translation products are cotranslationally integrated into the membrane. The sequence is that of Small ribosomal subunit protein mS45 (mrps35) from Neurospora crassa (strain ATCC 24698 / 74-OR23-1A / CBS 708.71 / DSM 1257 / FGSC 987).